The sequence spans 525 residues: Probable bifunctional tRNA threonylcarbamoyladenosine biosynthesis protein (525 aa).

The tract at residues 1-322 (MPEKRVLGIE…FRSDQVEVTW (322 aa)) is kae1. Positions 106, 110, and 127 each coordinate Fe cation. Residues 127-131 (YASGA), Asp159, Gly172, Glu176, and Asn255 contribute to the L-threonylcarbamoyladenylate site. Asp283 is a Fe cation binding site. One can recognise a Protein kinase domain in the interval 331–525 (APGQSETAER…HEIELRGRYL (195 aa)). ATP-binding positions include 338–346 (AERGAEASV) and Lys355. Asp442 (proton acceptor; for kinase activity) is an active-site residue.

The protein in the N-terminal section; belongs to the KAE1 / TsaD family. This sequence in the C-terminal section; belongs to the protein kinase superfamily. Tyr protein kinase family. BUD32 subfamily. Component of the KEOPS complex that consists of Kae1, Bud32, Cgi121 and Pcc1; the whole complex dimerizes. Fe(2+) serves as cofactor.

Its subcellular location is the cytoplasm. It catalyses the reaction L-seryl-[protein] + ATP = O-phospho-L-seryl-[protein] + ADP + H(+). The catalysed reaction is L-threonyl-[protein] + ATP = O-phospho-L-threonyl-[protein] + ADP + H(+). It carries out the reaction L-threonylcarbamoyladenylate + adenosine(37) in tRNA = N(6)-L-threonylcarbamoyladenosine(37) in tRNA + AMP + H(+). In terms of biological role, required for the formation of a threonylcarbamoyl group on adenosine at position 37 (t(6)A37) in tRNAs that read codons beginning with adenine. Is a component of the KEOPS complex that is probably involved in the transfer of the threonylcarbamoyl moiety of threonylcarbamoyl-AMP (TC-AMP) to the N6 group of A37. The Kae1 domain likely plays a direct catalytic role in this reaction. The Bud32 domain probably displays kinase activity that regulates Kae1 function. The polypeptide is Probable bifunctional tRNA threonylcarbamoyladenosine biosynthesis protein (Methanocorpusculum labreanum (strain ATCC 43576 / DSM 4855 / Z)).